A 271-amino-acid chain; its full sequence is RxLR effector protein PITG_15679 (271 aa).

The first 18 residues, 1–18 (MKVLQLIALTALVSSCVA), serve as a signal peptide directing secretion. The RxLR-dEER signature appears at 49–69 (RSLRRYDLEGLDSVNSNREER). A Nudix hydrolase domain is found at 212–271 (RLLSANVVMRLNDKGEKQILLISSSNPKKGDFLLPKGGWDKGEDVKKAALREVIEEGGVR). The Nudix box signature appears at 248–269 (GGWDKGEDVKKAALREVIEEGG).

The protein in the N-terminal section; belongs to the RxLR effector family. It in the C-terminal section; belongs to the Nudix hydrolase family.

It localises to the secreted. It is found in the host cytoplasm. Its subcellular location is the host nucleus. Its function is as follows. Effector that enhances P.infestans colonization of Nicotiana benthamiana leaves. This chain is RxLR effector protein PITG_15679, found in Phytophthora infestans (strain T30-4) (Potato late blight agent).